The sequence spans 95 residues: Co-chaperonin GroES (95 aa).

It belongs to the GroES chaperonin family. In terms of assembly, heptamer of 7 subunits arranged in a ring. Interacts with the chaperonin GroEL.

Its subcellular location is the cytoplasm. Together with the chaperonin GroEL, plays an essential role in assisting protein folding. The GroEL-GroES system forms a nano-cage that allows encapsulation of the non-native substrate proteins and provides a physical environment optimized to promote and accelerate protein folding. GroES binds to the apical surface of the GroEL ring, thereby capping the opening of the GroEL channel. In Chlorobaculum parvum (strain DSM 263 / NCIMB 8327) (Chlorobium vibrioforme subsp. thiosulfatophilum), this protein is Co-chaperonin GroES.